The chain runs to 589 residues: PTS system mannitol-specific EIICB component (589 aa).

Residues 1–25 (MERKSSLKVRVQKLGTSLSNMVMPN) are Cytoplasmic-facing. A PTS EIIC type-2 domain is found at 14–347 (LGTSLSNMVM…ILKSDNSDDD (334 aa)). A helical membrane pass occupies residues 26-47 (IGAFIAWGVAASLFIATGYLPN). The Extracellular segment spans residues 48-51 (KALD). The helical transmembrane segment at 52–73 (TNVVGPMLKYVLPLLIGYTGGY) threads the bilayer. Residues 74-136 (NIHKQRGGVI…TGFEMLVNNF (63 aa)) lie on the Cytoplasmic side of the membrane. The chain crosses the membrane as a helical span at residues 137 to 158 (SLGLIGFALMVLAFFVIGPVVA). At 159–167 (QLTEWVGIG) the chain is on the extracellular side. A helical membrane pass occupies residues 168 to 188 (VEAIVKVHLLPLANLIIEPAK). At 189-275 (ILFLNNALNH…VMMKPAMFLA (87 aa)) the chain is on the cytoplasmic side. A helical membrane pass occupies residues 276–295 (VIAGGLTGTFTFQTLGAGLT). Residues 296-317 (APASPGSIIAIMGMSPKGWGPH) lie on the Extracellular side of the membrane. A helical transmembrane segment spans residues 318-339 (LVVLAGVFAAAVASFLVASIIL). Residues 340–589 (KSDNSDDDSL…YDKLVARMHK (250 aa)) lie on the Cytoplasmic side of the membrane. Residues 383–478 (HQIIFACDAG…SLTNGKASGS (96 aa)) enclose the PTS EIIB type-2 domain. Cysteine 389 serves as the catalytic Phosphocysteine intermediate; for EIIB activity. Phosphocysteine; by EIIA is present on cysteine 389.

As to quaternary structure, homodimer.

The protein resides in the cell membrane. The catalysed reaction is D-mannitol(out) + N(pros)-phospho-L-histidyl-[protein] = D-mannitol 1-phosphate(in) + L-histidyl-[protein]. The phosphoenolpyruvate-dependent sugar phosphotransferase system (sugar PTS), a major carbohydrate active transport system, catalyzes the phosphorylation of incoming sugar substrates concomitantly with their translocation across the cell membrane. The enzyme II CmtAB PTS system is involved in D-mannitol transport. The protein is PTS system mannitol-specific EIICB component of Streptococcus mutans serotype c (strain ATCC 700610 / UA159).